We begin with the raw amino-acid sequence, 318 residues long: Porphobilinogen deaminase (318 aa).

At Cys241 the chain carries S-(dipyrrolylmethanemethyl)cysteine.

This sequence belongs to the HMBS family. As to quaternary structure, monomer. It depends on dipyrromethane as a cofactor.

The enzyme catalyses 4 porphobilinogen + H2O = hydroxymethylbilane + 4 NH4(+). Its pathway is porphyrin-containing compound metabolism; protoporphyrin-IX biosynthesis; coproporphyrinogen-III from 5-aminolevulinate: step 2/4. Tetrapolymerization of the monopyrrole PBG into the hydroxymethylbilane pre-uroporphyrinogen in several discrete steps. The chain is Porphobilinogen deaminase from Geobacter sp. (strain M21).